A 292-amino-acid polypeptide reads, in one-letter code: Release factor glutamine methyltransferase (292 aa).

Residues 126–130 (GTGTG), Asp-157, Trp-184, and Asn-198 contribute to the S-adenosyl-L-methionine site. Residue 198 to 201 (NPPY) participates in substrate binding.

This sequence belongs to the protein N5-glutamine methyltransferase family. PrmC subfamily.

The catalysed reaction is L-glutaminyl-[peptide chain release factor] + S-adenosyl-L-methionine = N(5)-methyl-L-glutaminyl-[peptide chain release factor] + S-adenosyl-L-homocysteine + H(+). In terms of biological role, methylates the class 1 translation termination release factors RF1/PrfA and RF2/PrfB on the glutamine residue of the universally conserved GGQ motif. This is Release factor glutamine methyltransferase from Haemophilus influenzae (strain ATCC 51907 / DSM 11121 / KW20 / Rd).